Reading from the N-terminus, the 442-residue chain is Glutamyl-tRNA(Gln) amidotransferase subunit D (442 aa).

The segment at 63 to 84 (TQTDIGSSAGAGADTEADKTES) is disordered. Residues 102-429 (PTVSLISTGG…PDPTNAMRKS (328 aa)) enclose the Asparaginase/glutaminase domain. Residues threonine 112, threonine 188, aspartate 189, and lysine 265 contribute to the active site.

This sequence belongs to the asparaginase 1 family. GatD subfamily. Heterodimer of GatD and GatE.

The catalysed reaction is L-glutamyl-tRNA(Gln) + L-glutamine + ATP + H2O = L-glutaminyl-tRNA(Gln) + L-glutamate + ADP + phosphate + H(+). Allows the formation of correctly charged Gln-tRNA(Gln) through the transamidation of misacylated Glu-tRNA(Gln) in organisms which lack glutaminyl-tRNA synthetase. The reaction takes place in the presence of glutamine and ATP through an activated gamma-phospho-Glu-tRNA(Gln). The GatDE system is specific for glutamate and does not act on aspartate. The polypeptide is Glutamyl-tRNA(Gln) amidotransferase subunit D (Haloquadratum walsbyi (strain DSM 16790 / HBSQ001)).